A 269-amino-acid polypeptide reads, in one-letter code: Glutamate racemase (269 aa).

Substrate is bound by residues 7–8 (DS) and 39–40 (YG). The Proton donor/acceptor role is filled by cysteine 70. A substrate-binding site is contributed by 71-72 (NT). Cysteine 194 (proton donor/acceptor) is an active-site residue. Position 195 to 196 (195 to 196 (TH)) interacts with substrate.

The protein belongs to the aspartate/glutamate racemases family.

It carries out the reaction L-glutamate = D-glutamate. It participates in cell wall biogenesis; peptidoglycan biosynthesis. Provides the (R)-glutamate required for cell wall biosynthesis. This chain is Glutamate racemase, found in Ruegeria pomeroyi (strain ATCC 700808 / DSM 15171 / DSS-3) (Silicibacter pomeroyi).